The following is a 283-amino-acid chain: Diaminopimelate epimerase (283 aa).

Substrate-binding residues include Asn13, Gln46, and Asn66. Cys75 functions as the Proton donor in the catalytic mechanism. Residues 76–77 (GN), Asn166, Asn199, and 217–218 (ER) each bind substrate. Catalysis depends on Cys226, which acts as the Proton acceptor. 227–228 (GT) lines the substrate pocket.

The protein belongs to the diaminopimelate epimerase family. Homodimer.

It localises to the cytoplasm. The catalysed reaction is (2S,6S)-2,6-diaminopimelate = meso-2,6-diaminopimelate. The protein operates within amino-acid biosynthesis; L-lysine biosynthesis via DAP pathway; DL-2,6-diaminopimelate from LL-2,6-diaminopimelate: step 1/1. Its function is as follows. Catalyzes the stereoinversion of LL-2,6-diaminopimelate (L,L-DAP) to meso-diaminopimelate (meso-DAP), a precursor of L-lysine and an essential component of the bacterial peptidoglycan. The polypeptide is Diaminopimelate epimerase (Herminiimonas arsenicoxydans).